The primary structure comprises 2035 residues: Envoplakin (2035 aa).

Low complexity predominate over residues 1-27 (MFKGLSKGSQGKGSPKGSPAKGSPKGS). Disordered regions lie at residues 1–37 (MFKG…AATQ) and 63–84 (KLQQ…QETG). The segment at 1–841 (MFKGLSKGSQ…LEPALAVSAP (841 aa)) is globular 1. The 4 X 4 AA tandem repeats of K-G-S-P stretch occupies residues 12 to 28 (KGSPKGSPAKGSPKGSP). The segment covering 71–84 (GEQNQALQHQQETG) has biased composition (polar residues). The Spectrin repeat unit spans residues 229-330 (YTHLQGCTKQ…LCICQESQLQ (102 aa)). Residues 400–419 (QEVAPLPQRRNPSKQPLHVD) form a disordered region. The region spanning 413 to 470 (KQPLHVDSICDWDSGEVQLLRGERYTLKDNADPYTWLVQGPGGETKSAPAACLCIPAP) is the SH3 domain. Positions 842–1664 (KRLRVISLQE…EKERTLRDLH (823 aa)) form a coiled coil. The interval 842–1674 (KRLRVISLQE…TKVSREELNQ (833 aa)) is central fibrous rod domain. Residues 1186-1227 (KQKPKVQLQERVSEIFQVLPETEQEIRRLRAQLQETGSKKSG) form a Plectin 1 repeat. A Phosphoserine modification is found at S1576. The span at 1607 to 1631 (KQQKARQLQEEGRLLSQKTESERQK) shows a compositional bias: basic and acidic residues. Positions 1607–1637 (KQQKARQLQEEGRLLSQKTESERQKAAQRSQ) are disordered. Residues 1675–2035 (ETQTRETNLS…SPTLPRSCVR (361 aa)) form a globular 2 region. The Plectin 2 repeat unit spans residues 1679 to 1714 (RETNLSTKICILEPETGNDMSPYEAYKRGVIDRGQY). S1800 carries the post-translational modification Phosphoserine. Plectin repeat units follow at residues 1819–1856 (FGLT…PITG), 1857–1894 (QKLL…NTST), 1895–1932 (QRLL…QESV), 1933–1970 (LPHL…EDLG), and 1971–2008 (QLLQ…PLSG). S2026 bears the Phosphoserine mark.

It belongs to the plakin or cytolinker family. May form a homodimer or a heterodimer with PPL.

It is found in the cell junction. The protein resides in the desmosome. Its subcellular location is the cornified envelope. The protein localises to the cytoplasm. It localises to the cytoskeleton. Component of the cornified envelope of keratinocytes. May link the cornified envelope to desmosomes and intermediate filaments. The protein is Envoplakin (Evpl) of Mus musculus (Mouse).